The chain runs to 641 residues: Fructose-1,6-bisphosphatase class 3 (641 aa).

The protein belongs to the FBPase class 3 family. Requires Mn(2+) as cofactor.

The catalysed reaction is beta-D-fructose 1,6-bisphosphate + H2O = beta-D-fructose 6-phosphate + phosphate. It participates in carbohydrate biosynthesis; gluconeogenesis. This Latilactobacillus sakei subsp. sakei (strain 23K) (Lactobacillus sakei subsp. sakei) protein is Fructose-1,6-bisphosphatase class 3.